The sequence spans 379 residues: Lactosylceramide 1,3-N-acetyl-beta-D-glucosaminyltransferase A (379 aa).

At 1-12 (MFMNCRRVKKWH) the chain is on the cytoplasmic side. Residues 13–30 (FLQLLSMCCVMSVLMVCW) traverse the membrane as a helical; Signal-anchor for type II membrane protein segment. At 31 to 379 (EHVDHHVVSH…NTYSCMAAFT (349 aa)) the chain is on the lumenal side. N-linked (GlcNAc...) asparagine glycosylation is found at Asn57, Asn113, Asn168, and Asn277.

This sequence belongs to the glycosyltransferase 31 family.

Its subcellular location is the golgi apparatus membrane. It catalyses the reaction a beta-D-Gal-(1-&gt;4)-beta-D-Glc-(1&lt;-&gt;1)-Cer(d18:1(4E)) + UDP-N-acetyl-alpha-D-glucosamine = a beta-D-GlcNAc-(1-&gt;3)-beta-D-Gal-(1-&gt;4)-beta-D-Glc-(1&lt;-&gt;1)-Cer(d18:1(4E)) + UDP + H(+). The catalysed reaction is a neolactoside nLc4Cer(d18:1(4E)) + UDP-N-acetyl-alpha-D-glucosamine = a neolactoside IV(3)-beta-GlcNAc-nLc4Cer(d18:1(4E)) + UDP + H(+). It functions in the pathway protein modification; protein glycosylation. Its function is as follows. Beta-1,3-N-acetylglucosaminyltransferase that plays a key role in the synthesis of lacto- or neolacto-series carbohydrate chains on glycolipids. The polypeptide is Lactosylceramide 1,3-N-acetyl-beta-D-glucosaminyltransferase A (b3gnt5a) (Danio rerio (Zebrafish)).